A 250-amino-acid chain; its full sequence is MLASTRHIARGDTGNVSVRIRRVTTTRAGGVSAPPFDTFNLGDHVGDDPAAVAANRARLAAAIGLPGNRVVWMNQVHGDRVELVDQPRNTALDDTDGLVTATPRLALAVVTADCVPVLMADARAGIAAAVHAGRAGAQRGVVVRALEVMLSLGAQVRDISALLGPAVSGRNYEVPAAMADEVEAALPGSRTTTAAGTPGVDLRAGIACQLRDLGVESIDVDPRCTVADPTLFSHRRDAPTGRFASLVWME.

Histidine 77, cysteine 114, and histidine 131 together coordinate Zn(2+).

Belongs to the purine nucleoside phosphorylase YfiH/LACC1 family. Homodimer. Cu(2+) serves as cofactor. Zn(2+) is required as a cofactor.

It catalyses the reaction adenosine + phosphate = alpha-D-ribose 1-phosphate + adenine. The enzyme catalyses S-methyl-5'-thioadenosine + phosphate = 5-(methylsulfanyl)-alpha-D-ribose 1-phosphate + adenine. It carries out the reaction inosine + phosphate = alpha-D-ribose 1-phosphate + hypoxanthine. The catalysed reaction is adenosine + H2O + H(+) = inosine + NH4(+). Its function is as follows. Purine nucleoside enzyme that catalyzes the phosphorolysis of adenosine and inosine nucleosides, yielding D-ribose 1-phosphate and the respective free bases, adenine and hypoxanthine. Also catalyzes the phosphorolysis of S-methyl-5'-thioadenosine into adenine and S-methyl-5-thio-alpha-D-ribose 1-phosphate. Also has adenosine deaminase activity. The polypeptide is Purine nucleoside phosphorylase BQ2027_MB2173C (Mycobacterium bovis (strain ATCC BAA-935 / AF2122/97)).